The primary structure comprises 1232 residues: Histone-lysine N-methyltransferase MECOM (1232 aa).

Residues 22-68 (PEIPLEEMPDADADGITSVPSLHIQEPCSPATSSESFTPKEGSPYKA) are disordered. Over residues 25 to 34 (PLEEMPDADA) the composition is skewed to acidic residues. The SET domain maps to 80–192 (DEFELRESTM…PGEELLLFMK (113 aa)). Glycyl lysine isopeptide (Lys-Gly) (interchain with G-Cter in SUMO2) cross-links involve residues K101 and K192. Residues 191-442 (MKSEEDPHEP…NHFAAGGFFG (252 aa)) are interaction with SUV39H1 and probably MAPK9 and SMAD3. 5 consecutive C2H2-type zinc fingers follow at residues 211–238 (HRCE…STPH), 265–287 (QDCK…MLSH), 293–315 (YKCD…QMSH), 321–344 (YECE…RSQH), and 350–372 (HACP…KHIH). A Glycyl lysine isopeptide (Lys-Gly) (interchain with G-Cter in SUMO2) cross-link involves residue K294. Residues K369 and K376 each participate in a glycyl lysine isopeptide (Lys-Gly) (interchain with G-Cter in SUMO2) cross-link. A C2H2-type 6 zinc finger spans residues 378–400 (FICEVCHKSYTQFSNLCRHKRMH). The C2H2-type 7; atypical zinc finger occupies 407 to 429 (IKCKDCGQMFSTTSSLNKHRRFC). Residues K432, K525, K545, K549, and K557 each participate in a glycyl lysine isopeptide (Lys-Gly) (interchain with G-Cter in SUMO2) cross-link. The disordered stretch occupies residues 548 to 622 (SKHPPVGDNK…KCKENGKMFK (75 aa)). Residues 562–577 (LPERSSEERPLEKISD) show a composition bias toward basic and acidic residues. Residues 588–600 (STPSGSDLETTSG) show a composition bias toward polar residues. Residues 608–622 (ESDKEKCKENGKMFK) are compositionally biased toward basic and acidic residues. A Nuclear localization signal motif is present at residues 611–624 (KEKCKENGKMFKDK). K624 participates in a covalent cross-link: Glycyl lysine isopeptide (Lys-Gly) (interchain with G-Cter in SUMO2). S626 carries the post-translational modification Phosphoserine. Glycyl lysine isopeptide (Lys-Gly) (interchain with G-Cter in SUMO2) cross-links involve residues K637, K665, K687, and K723. The tract at residues 720 to 823 (LPLKMEPQSP…DGSLQHARPT (104 aa)) is disordered. S728 bears the Phosphoserine mark. Residues K733, K734, and K737 each participate in a glycyl lysine isopeptide (Lys-Gly) (interchain with G-Cter in SUMO2) cross-link. S742 is modified (phosphoserine). Positions 743 to 747 (PFDLT) match the CTBP-binding motif 1 motif. Residues K751, K754, and K762 each participate in a glycyl lysine isopeptide (Lys-Gly) (interchain with G-Cter in SUMO2) cross-link. Positions 758–773 (SGPSKPSGTPATSQDQ) are enriched in polar residues. The short motif at 774-778 (PLDLS) is the CTBP-binding motif 2 element. Glycyl lysine isopeptide (Lys-Gly) (interchain with G-Cter in SUMO2) cross-links involve residues K789, K802, and K803. The span at 791 to 805 (TEPRKNHVFGEKKGS) shows a compositional bias: basic and acidic residues. Residues 806–816 (NMDTRPSSDGS) are compositionally biased toward polar residues. Residues K837, K846, K848, and K879 each participate in a glycyl lysine isopeptide (Lys-Gly) (interchain with G-Cter in SUMO2) cross-link. 3 consecutive C2H2-type zinc fingers follow at residues 914-936 (YTCR…LRTH), 942-965 (YRCK…RNIH), and 971-993 (FKCH…LKKH). Residue K1020 forms a Glycyl lysine isopeptide (Lys-Gly) (interchain with G-Cter in SUMO2) linkage. A compositionally biased stretch (polar residues) spans 1032–1043 (IGNSNHGSQSPR). The interval 1032-1107 (IGNSNHGSQS…GVTRLDEEIP (76 aa)) is disordered. A phosphoserine mark is found at S1039 and S1041. Positions 1044–1059 (NMEERMNGSHFKDKKA) are enriched in basic and acidic residues. Residues K1055 and K1058 each participate in a glycyl lysine isopeptide (Lys-Gly) (interchain with G-Cter in SUMO2) cross-link. Residues 1068–1088 (LLDDEEVEDEVLLDEEDEDND) show a composition bias toward acidic residues. Basic and acidic residues predominate over residues 1089–1104 (IPGKPRKELGVTRLDE). Residues K1122, K1129, K1134, K1151, K1178, and K1186 each participate in a glycyl lysine isopeptide (Lys-Gly) (interchain with G-Cter in SUMO2) cross-link.

In terms of assembly, homooligomer. Interacts with CTBP1. Interacts with SMAD3 (via MH2 domain); the interaction is direct. Interacts with SMAD4; through interaction with SMAD3. Interacts with CREBBP, KAT2B and histone deacetylases. Interacts with MAPK8 and MAPK9; inhibits JNK signaling. Interacts with SUV39H1 (via SET domain); enhances MECOM transcriptional repression activity. Post-translationally, may be acetylated by CREBBP and KAT2B.

The protein localises to the nucleus. It localises to the nucleus speckle. The protein resides in the cytoplasm. It carries out the reaction L-lysyl(9)-[histone H3] + S-adenosyl-L-methionine = N(6)-methyl-L-lysyl(9)-[histone H3] + S-adenosyl-L-homocysteine + H(+). Functionally, functions as a transcriptional regulator binding to DNA sequences in the promoter region of target genes and regulating positively or negatively their expression. Oncogene which plays a role in development, cell proliferation and differentiation. May also play a role in apoptosis through regulation of the JNK and TGF-beta signaling. Involved in hematopoiesis. Its function is as follows. Displays histone methyltransferase activity and monomethylates 'Lys-9' of histone H3 (H3K9me1) in vitro. Probably catalyzes the monomethylation of free histone H3 in the cytoplasm which is then transported to the nucleus and incorporated into nucleosomes where SUV39H methyltransferases use it as a substrate to catalyze histone H3 'Lys-9' trimethylation. Likely to be one of the primary histone methyltransferases along with PRDM16 that direct cytoplasmic H3K9me1 methylation. The chain is Histone-lysine N-methyltransferase MECOM from Mus musculus (Mouse).